The primary structure comprises 1393 residues: DNA-directed RNA polymerase subunit beta' (1393 aa).

The Zn(2+) site is built by Cys-72, Cys-74, Cys-87, and Cys-90. Mg(2+) contacts are provided by Asp-463, Asp-465, and Asp-467. The Zn(2+) site is built by Cys-812, Cys-887, Cys-894, and Cys-897.

It belongs to the RNA polymerase beta' chain family. The RNAP catalytic core consists of 2 alpha, 1 beta, 1 beta' and 1 omega subunit. When a sigma factor is associated with the core the holoenzyme is formed, which can initiate transcription. Mg(2+) serves as cofactor. It depends on Zn(2+) as a cofactor.

The catalysed reaction is RNA(n) + a ribonucleoside 5'-triphosphate = RNA(n+1) + diphosphate. Functionally, DNA-dependent RNA polymerase catalyzes the transcription of DNA into RNA using the four ribonucleoside triphosphates as substrates. The polypeptide is DNA-directed RNA polymerase subunit beta' (Chlamydia abortus (strain DSM 27085 / S26/3) (Chlamydophila abortus)).